We begin with the raw amino-acid sequence, 633 residues long: Probable extracellular metalloproteinase 5 (633 aa).

A signal peptide spans 1–20; the sequence is MHGLLLAAAGLLSLPLHVLA. Positions 21–244 are excised as a propeptide; it reads HPQPSTNLAG…VHNVVDYVSH (224 aa). N-linked (GlcNAc...) asparagine glycosylation is present at Asn285. A Zn(2+)-binding site is contributed by His428. Glu429 is an active-site residue. A Zn(2+)-binding site is contributed by His432. 2 N-linked (GlcNAc...) asparagine glycosylation sites follow: Asn592 and Asn621.

It belongs to the peptidase M36 family. Zn(2+) is required as a cofactor.

Its subcellular location is the secreted. Functionally, secreted metalloproteinase probably acting as a virulence factor. The protein is Probable extracellular metalloproteinase 5 (MEP5) of Trichophyton verrucosum (strain HKI 0517).